The following is a 30-amino-acid chain: Cyclotide hyen-H (30 aa).

A cross-link (cyclopeptide (Lys-Asp)) is located at residues 1–30; it reads KIPCGESCVYIPCISSVLGCSCSNKVCYKD. Intrachain disulfides connect C4-C20, C8-C22, and C13-C27.

Post-translationally, this is a cyclic peptide. In terms of tissue distribution, detected in stems (at protein level).

Probably participates in a plant defense mechanism. In Pigea enneasperma (Spade flower), this protein is Cyclotide hyen-H.